Here is a 336-residue protein sequence, read N- to C-terminus: Holliday junction branch migration complex subunit RuvB (336 aa).

The large ATPase domain (RuvB-L) stretch occupies residues Ala4 to Tyr184. Residues Ile23, Arg24, Gly65, Lys68, Thr69, Thr70, Glu131–Tyr133, Arg174, Tyr184, and Arg221 contribute to the ATP site. Thr69 contributes to the Mg(2+) binding site. The tract at residues Gln185–Asn255 is small ATPAse domain (RuvB-S). The tract at residues Ala258–Pro336 is head domain (RuvB-H). Arg294, Arg313, and Arg318 together coordinate DNA.

This sequence belongs to the RuvB family. Homohexamer. Forms an RuvA(8)-RuvB(12)-Holliday junction (HJ) complex. HJ DNA is sandwiched between 2 RuvA tetramers; dsDNA enters through RuvA and exits via RuvB. An RuvB hexamer assembles on each DNA strand where it exits the tetramer. Each RuvB hexamer is contacted by two RuvA subunits (via domain III) on 2 adjacent RuvB subunits; this complex drives branch migration. In the full resolvosome a probable DNA-RuvA(4)-RuvB(12)-RuvC(2) complex forms which resolves the HJ.

It localises to the cytoplasm. It carries out the reaction ATP + H2O = ADP + phosphate + H(+). In terms of biological role, the RuvA-RuvB-RuvC complex processes Holliday junction (HJ) DNA during genetic recombination and DNA repair, while the RuvA-RuvB complex plays an important role in the rescue of blocked DNA replication forks via replication fork reversal (RFR). RuvA specifically binds to HJ cruciform DNA, conferring on it an open structure. The RuvB hexamer acts as an ATP-dependent pump, pulling dsDNA into and through the RuvAB complex. RuvB forms 2 homohexamers on either side of HJ DNA bound by 1 or 2 RuvA tetramers; 4 subunits per hexamer contact DNA at a time. Coordinated motions by a converter formed by DNA-disengaged RuvB subunits stimulates ATP hydrolysis and nucleotide exchange. Immobilization of the converter enables RuvB to convert the ATP-contained energy into a lever motion, pulling 2 nucleotides of DNA out of the RuvA tetramer per ATP hydrolyzed, thus driving DNA branch migration. The RuvB motors rotate together with the DNA substrate, which together with the progressing nucleotide cycle form the mechanistic basis for DNA recombination by continuous HJ branch migration. Branch migration allows RuvC to scan DNA until it finds its consensus sequence, where it cleaves and resolves cruciform DNA. The sequence is that of Holliday junction branch migration complex subunit RuvB from Escherichia coli (strain ATCC 8739 / DSM 1576 / NBRC 3972 / NCIMB 8545 / WDCM 00012 / Crooks).